The primary structure comprises 184 residues: Large ribosomal subunit protein bL9 (184 aa).

Positions 160 to 184 (LQNQKSEQQEAEQDANKEAADGDDS) are disordered. A compositionally biased stretch (basic and acidic residues) spans 173-184 (DANKEAADGDDS).

This sequence belongs to the bacterial ribosomal protein bL9 family.

Its function is as follows. Binds to the 23S rRNA. The sequence is that of Large ribosomal subunit protein bL9 from Wolbachia sp. subsp. Drosophila simulans (strain wRi).